We begin with the raw amino-acid sequence, 470 residues long: ATP synthase subunit beta (470 aa).

157–164 contacts ATP; the sequence is GGAGVGKT.

This sequence belongs to the ATPase alpha/beta chains family. In terms of assembly, F-type ATPases have 2 components, CF(1) - the catalytic core - and CF(0) - the membrane proton channel. CF(1) has five subunits: alpha(3), beta(3), gamma(1), delta(1), epsilon(1). CF(0) has three main subunits: a(1), b(2) and c(9-12). The alpha and beta chains form an alternating ring which encloses part of the gamma chain. CF(1) is attached to CF(0) by a central stalk formed by the gamma and epsilon chains, while a peripheral stalk is formed by the delta and b chains.

The protein resides in the cell inner membrane. It carries out the reaction ATP + H2O + 4 H(+)(in) = ADP + phosphate + 5 H(+)(out). Produces ATP from ADP in the presence of a proton gradient across the membrane. The catalytic sites are hosted primarily by the beta subunits. The polypeptide is ATP synthase subunit beta (Geobacter sulfurreducens (strain ATCC 51573 / DSM 12127 / PCA)).